A 193-amino-acid polypeptide reads, in one-letter code: Ion-translocating oxidoreductase complex subunit A (193 aa).

The next 6 helical transmembrane spans lie at 4–24 (FLLL…QFLG), 39–59 (IGMS…SYLV), 63–83 (ILLP…VIAV), 102–122 (LLGI…VALL), 134–154 (VIYG…FAAM), and 171–191 (SISM…TGLV).

Belongs to the NqrDE/RnfAE family. As to quaternary structure, the complex is composed of six subunits: RnfA, RnfB, RnfC, RnfD, RnfE and RnfG.

Its subcellular location is the cell inner membrane. Its function is as follows. Part of a membrane-bound complex that couples electron transfer with translocation of ions across the membrane. This Pseudoalteromonas atlantica (strain T6c / ATCC BAA-1087) protein is Ion-translocating oxidoreductase complex subunit A.